Consider the following 154-residue polypeptide: Endoribonuclease YbeY (154 aa).

Zn(2+) contacts are provided by His113, His117, and His123.

The protein belongs to the endoribonuclease YbeY family. Zn(2+) is required as a cofactor.

Its subcellular location is the cytoplasm. Its function is as follows. Single strand-specific metallo-endoribonuclease involved in late-stage 70S ribosome quality control and in maturation of the 3' terminus of the 16S rRNA. In Anaplasma marginale (strain Florida), this protein is Endoribonuclease YbeY.